The primary structure comprises 407 residues: Protein NIS1 (407 aa).

Positions 41–61 (SNSNSNSNTNSNTNSNTNSNS) are enriched in low complexity. The segment at 41–64 (SNSNSNSNTNSNTNSNTNSNSDTK) is disordered. Residues Ser260, Ser264, Ser300, and Ser302 each carry the phosphoserine modification. The span at 277–302 (IKQNSTTPTTRSVYNKNVGRSNTSPS) shows a compositional bias: polar residues. The tract at residues 277–315 (IKQNSTTPTTRSVYNKNVGRSNTSPSVLYHPKRRGKLNT) is disordered. Basic residues predominate over residues 306–315 (HPKRRGKLNT). An SUMO-binding motif is present at residues 391–398 (IIIPDSQD).

Interacts with CBF2, GIS1, NAP1, PRM8, REI1, SHS1 and SMT3.

Its subcellular location is the bud neck. It is found in the cytoplasm. The protein resides in the cell cortex. Functionally, may be involved in a mitotic signaling network. Binds sumoylated proteins and may stabilize SUMO chains. The protein is Protein NIS1 (NIS1) of Saccharomyces cerevisiae (strain ATCC 204508 / S288c) (Baker's yeast).